A 150-amino-acid polypeptide reads, in one-letter code: Deoxyuridine 5'-triphosphate nucleotidohydrolase (150 aa).

Substrate is bound by residues 69 to 71 (RSG), asparagine 82, 86 to 88 (LID), and methionine 96.

It belongs to the dUTPase family. It depends on Mg(2+) as a cofactor.

It carries out the reaction dUTP + H2O = dUMP + diphosphate + H(+). Its pathway is pyrimidine metabolism; dUMP biosynthesis; dUMP from dCTP (dUTP route): step 2/2. Functionally, this enzyme is involved in nucleotide metabolism: it produces dUMP, the immediate precursor of thymidine nucleotides and it decreases the intracellular concentration of dUTP so that uracil cannot be incorporated into DNA. This Leptothrix cholodnii (strain ATCC 51168 / LMG 8142 / SP-6) (Leptothrix discophora (strain SP-6)) protein is Deoxyuridine 5'-triphosphate nucleotidohydrolase.